Reading from the N-terminus, the 179-residue chain is Probable galaptin lec-7 (179 aa).

In terms of domain architecture, Galectin spans 11 to 138; that stretch reads SVYQIEENLK…SVDIESIVFK (128 aa).

In Caenorhabditis elegans, this protein is Probable galaptin lec-7 (lec-7).